We begin with the raw amino-acid sequence, 124 residues long: uncharacterized protein (124 aa).

The segment covering 62 to 72 has biased composition (basic residues); it reads KKNKKQTFLKH. Positions 62 to 86 are disordered; that stretch reads KKNKKQTFLKHHQSDDHSENKVYKS. Residues 73-83 show a composition bias toward basic and acidic residues; the sequence is HQSDDHSENKV. Residues 80–112 are a coiled coil; it reads ENKVYKSKKLEKKIQQLNKKKQLIDTKINFLKE.

This is an uncharacterized protein from Dictyostelium discoideum (Social amoeba).